Consider the following 476-residue polypeptide: WASH complex subunit 1 (476 aa).

A required for WASH complex assembly region spans residues 1 to 54; that stretch reads MTTVAQKHFLEGQTYSVPLIQPDLRREEAVQQVADALQYLQKVSGDIFNRISQR. 2 disordered regions span residues 273 to 412 and 427 to 476; these read SAPS…QGGD and GISG…DWES. A compositionally biased stretch (polar residues) spans 284–296; the sequence is TFSTESVEPSQAD. Over residues 302-333 the composition is skewed to pro residues; the sequence is LLPPPPPPPPPPPPVMPTTVPPPPPLPQPTAP. The tract at residues 354–476 is VCA; that stretch reads QGAPKEVVNP…GEEDEDDWES (123 aa). The region spanning 366 to 388 is the WH2 domain; sequence GRASLLESIRQAGGIGKANLRSV. A compositionally biased stretch (basic and acidic residues) spans 387–403; the sequence is SVKERKLEKKKQKEQEQ. Residues 467–476 show a composition bias toward acidic residues; sequence GEEDEDDWES.

The protein belongs to the WASH1 family. In terms of assembly, component of the WASH complex.

It is found in the early endosome membrane. It localises to the recycling endosome membrane. Acts as a nucleation-promoting factor at the surface of endosomes, where it recruits and activates the Arp2/3 complex to induce actin polymerization, playing a key role in the fission of tubules that serve as transport intermediates during endosome sorting. The protein is WASH complex subunit 1 of Gallus gallus (Chicken).